A 162-amino-acid polypeptide reads, in one-letter code: MHYVTPDLCDAYPELVQVVEPMFSNFGGRDSFGGEIVTIKCFEDNSLVKEQVDKDGKGKVLVVDGGGSLRRALLGDMLAEKAAKNGWEGIVVYGCIRDVDVIAQTDLGVQALASHPLKTDKRGIGDLNVAVTFGGVTFRPGEFVYADNNGIIVSPQALKMPE.

Residues 75–78 (GDML) and Arg97 contribute to the substrate site. Asp98 serves as a coordination point for a divalent metal cation.

The protein belongs to the class II aldolase/RraA-like family. As to quaternary structure, homotrimer. A divalent metal cation is required as a cofactor.

The enzyme catalyses 4-hydroxy-4-methyl-2-oxoglutarate = 2 pyruvate. It carries out the reaction oxaloacetate + H(+) = pyruvate + CO2. Its function is as follows. Catalyzes the aldol cleavage of 4-hydroxy-4-methyl-2-oxoglutarate (HMG) into 2 molecules of pyruvate. Also contains a secondary oxaloacetate (OAA) decarboxylase activity due to the common pyruvate enolate transition state formed following C-C bond cleavage in the retro-aldol and decarboxylation reactions. This Pseudomonas aeruginosa (strain LESB58) protein is Putative 4-hydroxy-4-methyl-2-oxoglutarate aldolase.